Here is a 422-residue protein sequence, read N- to C-terminus: Phospho-N-acetylmuramoyl-pentapeptide-transferase (422 aa).

The next 9 membrane-spanning stretches (helical) occupy residues 28-48, 71-91, 95-115, 136-156, 211-231, 246-266, 279-299, 313-333, and 399-419; these read LMAIILALLISSIWGDKFINL, VGVPSMGGVIIIVAILIPCLL, LHNIYMILMLITTVWLGSLGF, IIGQVGLGLIVGLTLYLSPDV, AGWILFVIITIFVVTAVSNGA, AIIGLTLGILAYVSSHIEFAG, LVIFICAFIGALIGFLWYNAY, IGGIIAVFAIIIHKELLIPIL, and KITVRFWIVTIVLAAITIITL.

It belongs to the glycosyltransferase 4 family. MraY subfamily. Requires Mg(2+) as cofactor.

Its subcellular location is the cell inner membrane. The catalysed reaction is UDP-N-acetyl-alpha-D-muramoyl-L-alanyl-gamma-D-glutamyl-meso-2,6-diaminopimeloyl-D-alanyl-D-alanine + di-trans,octa-cis-undecaprenyl phosphate = di-trans,octa-cis-undecaprenyl diphospho-N-acetyl-alpha-D-muramoyl-L-alanyl-D-glutamyl-meso-2,6-diaminopimeloyl-D-alanyl-D-alanine + UMP. It functions in the pathway cell wall biogenesis; peptidoglycan biosynthesis. In terms of biological role, catalyzes the initial step of the lipid cycle reactions in the biosynthesis of the cell wall peptidoglycan: transfers peptidoglycan precursor phospho-MurNAc-pentapeptide from UDP-MurNAc-pentapeptide onto the lipid carrier undecaprenyl phosphate, yielding undecaprenyl-pyrophosphoryl-MurNAc-pentapeptide, known as lipid I. The polypeptide is Phospho-N-acetylmuramoyl-pentapeptide-transferase (Bacteroides fragilis (strain ATCC 25285 / DSM 2151 / CCUG 4856 / JCM 11019 / LMG 10263 / NCTC 9343 / Onslow / VPI 2553 / EN-2)).